Reading from the N-terminus, the 99-residue chain is Protein RnfH (99 aa).

This sequence belongs to the UPF0125 (RnfH) family.

This Buchnera aphidicola subsp. Acyrthosiphon pisum (strain 5A) protein is Protein RnfH.